Reading from the N-terminus, the 1943-residue chain is Cadherin-86C (1943 aa).

Positions 1 to 102 (MASTSSSQPE…QNQQMQHHWP (102 aa)) are disordered. Residues 1–934 (MASTSSSQPE…TDTQYKAENK (934 aa)) lie on the Extracellular side of the membrane. Residue Asn12 is glycosylated (N-linked (GlcNAc...) asparagine). The span at 50 to 89 (PHHHHHHHHQHHHHHRLKQHHRHHHHHHRLQHHHHHHQQQ) shows a compositional bias: basic residues. Positions 90 to 100 (HNHQNQQMQHH) are enriched in low complexity. Cadherin domains are found at residues 238–366 (CSIT…PPVF), 367–483 (TSAP…PPYF), 484–600 (ENDH…APVF), 601–708 (EQPA…TPIF), and 709–832 (DKDL…SVKF). N-linked (GlcNAc...) asparagine glycans are attached at residues Asn244, Asn419, Asn531, Asn579, Asn585, Asn612, and Asn645. N-linked (GlcNAc...) asparagine glycosylation occurs at Asn912. Residues 935–955 (VLFWLLILLATLVALTILILL) form a helical membrane-spanning segment. Residues 956 to 1943 (LCCICSWCPL…NSGGESPQYS (988 aa)) lie on the Cytoplasmic side of the membrane. Disordered regions lie at residues 1038 to 1058 (DVGR…SAEE), 1390 to 1442 (KPSR…RKRI), 1458 to 1516 (EEEE…SHNR), 1546 to 1695 (YKHS…ERNV), and 1707 to 1895 (KSSV…DDHD). Residues 1047–1058 (EGDRRHIQSAEE) show a composition bias toward basic and acidic residues. Over residues 1426–1442 (IKRRRTKKRPRQPRKRI) the composition is skewed to basic residues. Basic and acidic residues-rich tracts occupy residues 1486–1497 (QLSDESRKDQSR) and 1507–1516 (HRSESDSHNR). Acidic residues predominate over residues 1552–1568 (DFDEDDTEYSIDSDGDE). Over residues 1580 to 1602 (QENERYRRQERTYAEPENPVDRK) the composition is skewed to basic and acidic residues. A compositionally biased stretch (polar residues) spans 1633–1667 (KQTSSEPPHNRVSISKYESTVTENGRKLMSTSTEI). Low complexity predominate over residues 1709 to 1724 (SVSGRTSTESSKSQPS). 4 stretches are compositionally biased toward basic and acidic residues: residues 1754–1764 (TGGRYKPEPAP), 1774–1793 (LLKE…ETDT), 1800–1810 (HSEHRFERENA), and 1837–1863 (KESK…ENEV). Positions 1879 to 1889 (HPTQKQLNAST) are enriched in polar residues.

As to expression, as cell intercalation proceeds, a row of stigmatophore cells surrounding the spiracular chamber show expression of Cad86C. Expression is regulated by the Abd-B cascade, requiring sal. Expressed in a broad region of the morphogenetic furrow and in clusters of cells posterior to the morphogenetic furrow. Weakly expressed in the epithelium of wing imaginal disks. In eye imaginal disk cells within the morphogenetic furrow, expression is localized to the apical region.

The protein localises to the cell membrane. In terms of biological role, cadherins are calcium-dependent cell adhesion proteins. They preferentially interact with themselves in a homophilic manner in connecting cells. This Drosophila melanogaster (Fruit fly) protein is Cadherin-86C (Cad86C).